Consider the following 58-residue polypeptide: Large ribosomal subunit protein bL32 (58 aa).

Basic residues predominate over residues 1-15 (MAVPKKKTSKAKRNQ). The disordered stretch occupies residues 1–23 (MAVPKKKTSKAKRNQRSATWKGK).

The protein belongs to the bacterial ribosomal protein bL32 family.

This is Large ribosomal subunit protein bL32 from Synechococcus sp. (strain CC9902).